The chain runs to 136 residues: Flagellar basal-body rod protein FlgC (136 aa).

The protein belongs to the flagella basal body rod proteins family. The basal body constitutes a major portion of the flagellar organelle and consists of four rings (L,P,S, and M) mounted on a central rod. The rod consists of about 26 subunits of FlgG in the distal portion, and FlgB, FlgC and FlgF are thought to build up the proximal portion of the rod with about 6 subunits each.

The protein localises to the bacterial flagellum basal body. This is Flagellar basal-body rod protein FlgC (flgC) from Buchnera aphidicola subsp. Baizongia pistaciae (strain Bp).